A 491-amino-acid polypeptide reads, in one-letter code: Ketol-acid reductoisomerase (NADP(+)) (491 aa).

One can recognise a KARI N-terminal Rossmann domain in the interval 16-207; it reads IKKCRFMKEN…GGHRAGVLES (192 aa). NADP(+) contacts are provided by residues 44–47, lysine 67, serine 77, and 107–109; these read CGSQ and DKQ. Histidine 131 is a catalytic residue. An NADP(+)-binding site is contributed by glycine 157. 2 consecutive KARI C-terminal knotted domains span residues 208-344 and 345-484; these read SFIA…NILS and YSEK…MKEM. 4 residues coordinate Mg(2+): aspartate 216, glutamate 220, glutamate 389, and glutamate 393. A substrate-binding site is contributed by serine 414.

The protein belongs to the ketol-acid reductoisomerase family. It depends on Mg(2+) as a cofactor.

The enzyme catalyses (2R)-2,3-dihydroxy-3-methylbutanoate + NADP(+) = (2S)-2-acetolactate + NADPH + H(+). It catalyses the reaction (2R,3R)-2,3-dihydroxy-3-methylpentanoate + NADP(+) = (S)-2-ethyl-2-hydroxy-3-oxobutanoate + NADPH + H(+). The protein operates within amino-acid biosynthesis; L-isoleucine biosynthesis; L-isoleucine from 2-oxobutanoate: step 2/4. Its pathway is amino-acid biosynthesis; L-valine biosynthesis; L-valine from pyruvate: step 2/4. Involved in the biosynthesis of branched-chain amino acids (BCAA). Catalyzes an alkyl-migration followed by a ketol-acid reduction of (S)-2-acetolactate (S2AL) to yield (R)-2,3-dihydroxy-isovalerate. In the isomerase reaction, S2AL is rearranged via a Mg-dependent methyl migration to produce 3-hydroxy-3-methyl-2-ketobutyrate (HMKB). In the reductase reaction, this 2-ketoacid undergoes a metal-dependent reduction by NADPH to yield (R)-2,3-dihydroxy-isovalerate. In Buchnera aphidicola subsp. Schizaphis graminum (strain Sg), this protein is Ketol-acid reductoisomerase (NADP(+)).